Consider the following 330-residue polypeptide: Protein pelota homolog (330 aa).

The protein belongs to the eukaryotic release factor 1 family. Pelota subfamily. In terms of assembly, monomer. A divalent metal cation is required as a cofactor.

It is found in the cytoplasm. Functionally, may function in recognizing stalled ribosomes, interact with stem-loop structures in stalled mRNA molecules, and effect endonucleolytic cleavage of the mRNA. May play a role in the release non-functional ribosomes and degradation of damaged mRNAs. Has endoribonuclease activity. The chain is Protein pelota homolog from Pyrobaculum neutrophilum (strain DSM 2338 / JCM 9278 / NBRC 100436 / V24Sta) (Thermoproteus neutrophilus).